Here is a 622-residue protein sequence, read N- to C-terminus: Type 2 DNA topoisomerase 6 subunit B (622 aa).

Residues N48, D80, 101–102 (SR), 111–118 (GQQGIGIS), and K435 each bind ATP.

This sequence belongs to the TOP6B family. Homodimer. Heterotetramer of two Top6A and two Top6B chains.

The catalysed reaction is ATP-dependent breakage, passage and rejoining of double-stranded DNA.. Functionally, relaxes both positive and negative superturns and exhibits a strong decatenase activity. This chain is Type 2 DNA topoisomerase 6 subunit B, found in Methanococcoides burtonii (strain DSM 6242 / NBRC 107633 / OCM 468 / ACE-M).